The sequence spans 760 residues: MNWRFVELLYFLFVWGRISVQPSHQEPAGTDQHVSKEFDWLISDRGPFHHSRSYLSFVERHRQGFTTRYKIYREFARWKVRNTAIERRDLVRHPVPLMPEFQRSIRLLGRRPTTQQFIDTIIKKYGTHLLISATLGGEEALTMYMDKSRLDRKSGNATQSVEALHQLASSYFVDRDGTMRRLHEIQISTGAIKVTETRTGLLGCNSYDNLDSVSSVLLQSTESKLHLQGLQIIFPQYLQEKFVQSALSYIMCNGEGEYVCQNSQCRCQCAEEFPQCNCPITDIQIMEFTLANMAKAWTEAYKDLENSDEFKSFMKRLPSNHFLTIGSIHQHWGNDWDLQSRYKLLQSATEAQRQKIQRTARKLFGLSVRCRHNPNHQLPRERTIQQWLARVQSLLYCNENGFWGTFLESQRSCVCHGSTTLCQRPIPCIIGGNNSCAMCSLANISLCGSCNKGYKLYRGRCEPQNVDSERSEQFISFETDLDFQDLELKYLLQKMDSRLYVHTTFISNEIRLDTFFDLRWRKRMSLTLKSNKNRMDFIHMVIGMSMRICQMRNSSLDPMFFVYVNPFSGSHSEGWNMPFGEFGYPRWEKIRLQNSQCYNWTLLLGNRWKTFFETVHIYLRSRTRLPTLRNETGQGPVDLSDPSKRQFYIKISDVQVFGYSLRFNADLLRSAVQQVNQSYTQGGQFYSSSSVMLLMLDIRDRINRLAPPVAPGKPQLDLFSCMLKHRLKLTNSEIIRVNHALDLYNTEILKQSDQMTAKLC.

The first 16 residues, 1-16, serve as a signal peptide directing secretion; that stretch reads MNWRFVELLYFLFVWG. The MACPF domain occupies 68–251; it reads RYKIYREFAR…FVQSALSYIM (184 aa). 7 N-linked (GlcNAc...) asparagine glycosylation sites follow: N156, N433, N443, N553, N599, N630, and N676.

It belongs to the BRINP family.

The protein resides in the cytoplasm. Plays a role in neurogenesis and brain development. May suppress cell cycle progression in postmitotic neurons by inhibiting G1/S transition. This chain is BMP/retinoic acid-inducible neural-specific protein 1 (Brinp1), found in Rattus norvegicus (Rat).